We begin with the raw amino-acid sequence, 337 residues long: Tetraacyldisaccharide 4'-kinase (337 aa).

56 to 63 (VAGGAGKT) is an ATP binding site.

It belongs to the LpxK family.

The catalysed reaction is a lipid A disaccharide + ATP = a lipid IVA + ADP + H(+). It functions in the pathway glycolipid biosynthesis; lipid IV(A) biosynthesis; lipid IV(A) from (3R)-3-hydroxytetradecanoyl-[acyl-carrier-protein] and UDP-N-acetyl-alpha-D-glucosamine: step 6/6. Transfers the gamma-phosphate of ATP to the 4'-position of a tetraacyldisaccharide 1-phosphate intermediate (termed DS-1-P) to form tetraacyldisaccharide 1,4'-bis-phosphate (lipid IVA). The polypeptide is Tetraacyldisaccharide 4'-kinase (Rhodospirillum centenum (strain ATCC 51521 / SW)).